Consider the following 41-residue polypeptide: Large ribosomal subunit protein bL36 (41 aa).

This sequence belongs to the bacterial ribosomal protein bL36 family.

The sequence is that of Large ribosomal subunit protein bL36 from Gluconacetobacter diazotrophicus (strain ATCC 49037 / DSM 5601 / CCUG 37298 / CIP 103539 / LMG 7603 / PAl5).